The chain runs to 437 residues: Sorting nexin-30 (437 aa).

Residues 1–45 (MAGGPPKALPSTGPQSLRDMPHPLAGSSSEEAVGGDSTPSPDLLM) form a disordered region. T38 is subject to Phosphothreonine. S40 bears the Phosphoserine mark. The region spanning 89–210 (RDLFVTVDDP…VFLTAKDLNA (122 aa)) is the PX domain. R132, Q134, K162, and R176 together coordinate a 1,2-diacyl-sn-glycero-3-phospho-(1D-myo-inositol-3-phosphate). Positions 234–437 (KLRSRPLEFA…PLLQEKQETK (204 aa)) constitute a BAR domain.

Belongs to the sorting nexin family. In terms of assembly, heterodimer; heterodimerizes with SNX4.

Its subcellular location is the early endosome membrane. Its function is as follows. Involved in the regulation of endocytosis and in several stages of intracellular trafficking. Together with SNX4, involved in autophagosome assembly. The sequence is that of Sorting nexin-30 from Mus musculus (Mouse).